The sequence spans 483 residues: UDP-N-acetylmuramoyl-L-alanyl-D-glutamate--2,6-diaminopimelate ligase (483 aa).

S30 lines the UDP-N-acetyl-alpha-D-muramoyl-L-alanyl-D-glutamate pocket. 109-115 (GTNGKTT) contacts ATP. Residues 151 to 152 (TT), S178, and R186 contribute to the UDP-N-acetyl-alpha-D-muramoyl-L-alanyl-D-glutamate site. The residue at position 218 (K218) is an N6-carboxylysine. Residues R380, 403–406 (DNPR), G453, and E457 contribute to the meso-2,6-diaminopimelate site. A Meso-diaminopimelate recognition motif motif is present at residues 403-406 (DNPR).

It belongs to the MurCDEF family. MurE subfamily. Mg(2+) serves as cofactor. In terms of processing, carboxylation is probably crucial for Mg(2+) binding and, consequently, for the gamma-phosphate positioning of ATP.

It is found in the cytoplasm. It catalyses the reaction UDP-N-acetyl-alpha-D-muramoyl-L-alanyl-D-glutamate + meso-2,6-diaminopimelate + ATP = UDP-N-acetyl-alpha-D-muramoyl-L-alanyl-gamma-D-glutamyl-meso-2,6-diaminopimelate + ADP + phosphate + H(+). Its pathway is cell wall biogenesis; peptidoglycan biosynthesis. In terms of biological role, catalyzes the addition of meso-diaminopimelic acid to the nucleotide precursor UDP-N-acetylmuramoyl-L-alanyl-D-glutamate (UMAG) in the biosynthesis of bacterial cell-wall peptidoglycan. This chain is UDP-N-acetylmuramoyl-L-alanyl-D-glutamate--2,6-diaminopimelate ligase, found in Chlamydia caviae (strain ATCC VR-813 / DSM 19441 / 03DC25 / GPIC) (Chlamydophila caviae).